Here is a 57-residue protein sequence, read N- to C-terminus: uncharacterized protein (57 aa).

Residues 34-54 (AALLDAAALVVIPGLLTAAAV) traverse the membrane as a helical segment.

It localises to the membrane. This is an uncharacterized protein from Dictyostelium discoideum (Social amoeba).